Here is a 79-residue protein sequence, read N- to C-terminus: Dolichyl-diphosphooligosaccharide--protein glycosyltransferase subunit TMEM258 (79 aa).

2 consecutive transmembrane segments (helical) span residues 17-37 (VFPHLTVVLLAIGMFFKAWFF) and 59-79 (VASLFMGFGVHFLLLWVGIFV).

It belongs to the OST5 family. Component of the oligosaccharyltransferase (OST) complex.

It is found in the membrane. The protein localises to the endoplasmic reticulum. It localises to the cytoplasm. Its pathway is protein modification; protein glycosylation. In terms of biological role, subunit of the oligosaccharyl transferase (OST) complex that catalyzes the initial transfer of a defined glycan (Glc(3)Man(9)GlcNAc(2) in eukaryotes) from the lipid carrier dolichol-pyrophosphate to an asparagine residue within an Asn-X-Ser/Thr consensus motif in nascent polypeptide chains, the first step in protein N-glycosylation. N-glycosylation occurs cotranslationally and the complex associates with the Sec61 complex at the channel-forming translocon complex that mediates protein translocation across the endoplasmic reticulum (ER). All subunits are required for a maximal enzyme activity. The polypeptide is Dolichyl-diphosphooligosaccharide--protein glycosyltransferase subunit TMEM258 (Danio rerio (Zebrafish)).